The chain runs to 464 residues: Glutamate--tRNA ligase 1 (464 aa).

Positions 8-18 (PSPTGHLHVGG) match the 'HIGH' region motif. The 'KMSKS' region signature appears at 231-235 (PLSKR). Lys234 serves as a coordination point for ATP.

The protein belongs to the class-I aminoacyl-tRNA synthetase family. Glutamate--tRNA ligase type 1 subfamily. In terms of assembly, monomer.

The protein resides in the cytoplasm. The enzyme catalyses tRNA(Glu) + L-glutamate + ATP = L-glutamyl-tRNA(Glu) + AMP + diphosphate. In terms of biological role, catalyzes the attachment of glutamate to tRNA(Glu) in a two-step reaction: glutamate is first activated by ATP to form Glu-AMP and then transferred to the acceptor end of tRNA(Glu). In Thermotoga petrophila (strain ATCC BAA-488 / DSM 13995 / JCM 10881 / RKU-1), this protein is Glutamate--tRNA ligase 1.